The sequence spans 493 residues: Glutamyl-tRNA(Gln) amidotransferase subunit A (493 aa).

Residues Lys79 and Ser159 each act as charge relay system in the active site. Ser183 acts as the Acyl-ester intermediate in catalysis.

This sequence belongs to the amidase family. GatA subfamily. Heterotrimer of A, B and C subunits.

The enzyme catalyses L-glutamyl-tRNA(Gln) + L-glutamine + ATP + H2O = L-glutaminyl-tRNA(Gln) + L-glutamate + ADP + phosphate + H(+). Its function is as follows. Allows the formation of correctly charged Gln-tRNA(Gln) through the transamidation of misacylated Glu-tRNA(Gln) in organisms which lack glutaminyl-tRNA synthetase. The reaction takes place in the presence of glutamine and ATP through an activated gamma-phospho-Glu-tRNA(Gln). This is Glutamyl-tRNA(Gln) amidotransferase subunit A from Agrobacterium fabrum (strain C58 / ATCC 33970) (Agrobacterium tumefaciens (strain C58)).